We begin with the raw amino-acid sequence, 418 residues long: MSWPQVQPEVNIGVVGHVDHGKTTLVQAITGVWTSKHSEELKRGMTIKLGYAEASIGVCPNCNKPEAYVTEYSCNQCGSDEKPQFLRKVSFIDAPGHEILMATMLSGAALMDGALLVVAANEPFPQPQTREHFVALGIVNIKNLIIVQNKVDVVSKEEALKQYKQIKEFLKGTWAEDAPIIPVSALHKINIDALIEGIQKYIPTPQRDLSKDPIMLVIRSFDVNKPGTPYNELKGGVIGGSIIQGKLEIGDEIKILPGLRHEKPGGKVEYEPLYTTITSIRFSDLEVKEAKPGGLVALGTELDPSYVKADSLVGSVVVKSSNKNVSVLWNLKIENYQLLERVVGAKELVKVENIKKGEVLMLTLGSATTLGVAKNIKNDELEVELKRPLVVWDKDLRVVISRQVSGRWRLVGWGIIKI.

Residues 7–206 (QPEVNIGVVG…GIQKYIPTPQ (200 aa)) enclose the tr-type G domain. Positions 16-23 (GHVDHGKT) are G1. Residues Asp19, Thr23, Gly44, and Thr46 each coordinate Mg(2+). A GTP-binding site is contributed by 19–24 (DHGKTT). Positions 44–48 (GMTIK) are G2. The Zn(2+) site is built by Cys59, Cys62, Cys74, and Cys77. The G3 stretch occupies residues 93–96 (DAPG). GTP contacts are provided by residues 149–152 (NKVD) and 184–186 (SAL). The segment at 149-152 (NKVD) is G4. The G5 stretch occupies residues 184–186 (SAL).

It belongs to the TRAFAC class translation factor GTPase superfamily. Classic translation factor GTPase family. EIF2G subfamily. In terms of assembly, heterotrimer composed of an alpha, a beta and a gamma chain. Mg(2+) serves as cofactor.

The catalysed reaction is GTP + H2O = GDP + phosphate + H(+). Its function is as follows. eIF-2 functions in the early steps of protein synthesis by forming a ternary complex with GTP and initiator tRNA. This Sulfurisphaera tokodaii (strain DSM 16993 / JCM 10545 / NBRC 100140 / 7) (Sulfolobus tokodaii) protein is Translation initiation factor 2 subunit gamma.